Consider the following 320-residue polypeptide: Cytochrome f (320 aa).

Residues 1 to 35 (MQTRNTLSWIREEITRSISVSLMIYIITWASISSA) form the signal peptide. 4 residues coordinate heme: Tyr-36, Cys-56, Cys-59, and His-60. A helical membrane pass occupies residues 286–306 (VQGLLFFLGSVVLAQIFLVLK).

The protein belongs to the cytochrome f family. As to quaternary structure, the 4 large subunits of the cytochrome b6-f complex are cytochrome b6, subunit IV (17 kDa polypeptide, petD), cytochrome f and the Rieske protein, while the 4 small subunits are PetG, PetL, PetM and PetN. The complex functions as a dimer. The cofactor is heme.

Its subcellular location is the plastid. It localises to the chloroplast thylakoid membrane. Component of the cytochrome b6-f complex, which mediates electron transfer between photosystem II (PSII) and photosystem I (PSI), cyclic electron flow around PSI, and state transitions. This chain is Cytochrome f, found in Olimarabidopsis pumila (Dwarf rocket).